The chain runs to 750 residues: DDT domain-containing protein DDR4 (750 aa).

The segment at 1–125 (MGSSSDIVPD…ITSLVPPPEP (125 aa)) is disordered. Residues 45–54 (RAQQRLQELQ) show a composition bias toward low complexity. Over residues 55-77 (AAERKLKPPKKEYKREQHRRREE) the composition is skewed to basic and acidic residues. Residues 78 to 100 (VVEEDEDSEDDDQEDEENDGDDE) are compositionally biased toward acidic residues. Residues 133–192 (LRSMWELASVLNFLHVFRPLLKINAEFSAEEFETALLTPNDTLSDIHIPLLKAIPPVTRM) enclose the DDT domain. Disordered stretches follow at residues 450–505 (NGRS…TDFV) and 532–750 (LKKR…TDNS). Polar residues predominate over residues 451-471 (GRSTSSTHPTEPVNDTASGRS). Residues 545-585 (EGDEEKGDEEYKWDEDNAEYEEEEEEEEEEDSLSASEEDSD) show a composition bias toward acidic residues. Basic and acidic residues predominate over residues 595-606 (RRETKLRSRSND). Residues 688-707 (NADTTNGKENNQLNKSNGTT) show a composition bias toward polar residues. Basic and acidic residues predominate over residues 741–750 (LKDDDKTDNS).

As to quaternary structure, interacts (via the DDT domain) with CHR11 (via C-terminus).

The protein resides in the nucleus. Functionally, probable transcription regulator. The protein is DDT domain-containing protein DDR4 of Arabidopsis thaliana (Mouse-ear cress).